Reading from the N-terminus, the 500-residue chain is L-arabinose isomerase (500 aa).

4 residues coordinate Mn(2+): glutamate 306, glutamate 333, histidine 350, and histidine 450.

Belongs to the arabinose isomerase family. Homohexamer. Mn(2+) is required as a cofactor.

The enzyme catalyses beta-L-arabinopyranose = L-ribulose. The protein operates within carbohydrate degradation; L-arabinose degradation via L-ribulose; D-xylulose 5-phosphate from L-arabinose (bacterial route): step 1/3. Catalyzes the conversion of L-arabinose to L-ribulose. This is L-arabinose isomerase from Enterobacter sp. (strain 638).